The primary structure comprises 546 residues: E3 ubiquitin-protein ligase NEURL1B (546 aa).

The 157-residue stretch at Ala38–Ser194 folds into the NHR 1 domain. Phosphothreonine is present on Thr199. The region spanning Glu270 to Gly424 is the NHR 2 domain. Residues Ser429–Arg490 form a disordered region. Positions Ser457–Ser471 are enriched in low complexity. The RING-type zinc finger occupies Cys494 to Arg534.

In terms of assembly, interacts with DLL1 and DLL4. In terms of tissue distribution, expressed in the limb buds and dorsal root ganglia. Expressed in brain and kidney and at low levels in the heart.

The protein localises to the cytoplasm. The enzyme catalyses S-ubiquitinyl-[E2 ubiquitin-conjugating enzyme]-L-cysteine + [acceptor protein]-L-lysine = [E2 ubiquitin-conjugating enzyme]-L-cysteine + N(6)-ubiquitinyl-[acceptor protein]-L-lysine.. It participates in protein modification; protein ubiquitination. E3 ubiquitin-protein ligase involved in regulation of the Notch pathway through influencing the stability and activity of several Notch ligands. This chain is E3 ubiquitin-protein ligase NEURL1B (Neurl1b), found in Mus musculus (Mouse).